A 350-amino-acid polypeptide reads, in one-letter code: 4-hydroxy-2-oxovalerate aldolase 3 (350 aa).

A Pyruvate carboxyltransferase domain is found at 13 to 265; the sequence is VVFHDMCLRD…DTGVDLFRLM (253 aa). 21–22 provides a ligand contact to substrate; the sequence is RD. Asp22 serves as a coordination point for Mn(2+). His25 (proton acceptor) is an active-site residue. Ser175 and His204 together coordinate substrate. 2 residues coordinate Mn(2+): His204 and His206. Tyr295 contributes to the substrate binding site.

This sequence belongs to the 4-hydroxy-2-oxovalerate aldolase family.

The enzyme catalyses (S)-4-hydroxy-2-oxopentanoate = acetaldehyde + pyruvate. The sequence is that of 4-hydroxy-2-oxovalerate aldolase 3 (lapG) from Azotobacter vinelandii (strain DJ / ATCC BAA-1303).